Consider the following 232-residue polypeptide: Large ribosomal subunit protein uL1 (232 aa).

The protein belongs to the universal ribosomal protein uL1 family. In terms of assembly, part of the 50S ribosomal subunit.

Binds directly to 23S rRNA. The L1 stalk is quite mobile in the ribosome, and is involved in E site tRNA release. Functionally, protein L1 is also a translational repressor protein, it controls the translation of the L11 operon by binding to its mRNA. The sequence is that of Large ribosomal subunit protein uL1 from Xanthomonas campestris pv. campestris (strain B100).